A 714-amino-acid chain; its full sequence is Structure-specific endonuclease subunit SLX4 1 (714 aa).

2 stretches are compositionally biased toward basic and acidic residues: residues 1 to 14 (MSPEGEESHAEDNL) and 24 to 34 (IHEETLAEESH). Disordered stretches follow at residues 1-116 (MSPE…QGSI) and 337-369 (DSSGPVNDKQPSVASETVESDSTPIVSPVKTPQ). Low complexity predominate over residues 36-46 (QSIQRSISRLS). Basic residues predominate over residues 79–92 (KTKKRKLKVSKPRK).

This sequence belongs to the SLX4 family. Forms a heterodimer with SLX1. In terms of processing, phosphorylated in response to DNA damage.

It is found in the nucleus. Functionally, regulatory subunit of the SLX1-SLX4 structure-specific endonuclease that resolves DNA secondary structures generated during DNA repair and recombination. Has endonuclease activity towards branched DNA substrates, introducing single-strand cuts in duplex DNA close to junctions with ss-DNA. In Candida tropicalis (strain ATCC MYA-3404 / T1) (Yeast), this protein is Structure-specific endonuclease subunit SLX4 1.